The following is a 552-amino-acid chain: Lon protease 2 (552 aa).

Gly97 to Thr104 lines the ATP pocket. A Lon proteolytic domain is found at Glu349–Asn535. Catalysis depends on residues Ser445 and Lys488.

This sequence belongs to the peptidase S16 family. Homohexamer. Organized in a ring with a central cavity.

The protein localises to the cytoplasm. The catalysed reaction is Hydrolysis of proteins in presence of ATP.. Its function is as follows. ATP-dependent serine protease that mediates the selective degradation of mutant and abnormal proteins as well as certain short-lived regulatory proteins. Required for cellular homeostasis and for survival from DNA damage and developmental changes induced by stress. Degrades polypeptides processively to yield small peptide fragments that are 5 to 10 amino acids long. Binds to DNA in a double-stranded, site-specific manner. The chain is Lon protease 2 (lon2) from Bacillus subtilis (strain 168).